The sequence spans 620 residues: MYND-type zinc finger protein MUB1 (620 aa).

The segment at 514-555 (NFSCGKWEDFPRQFAKCRRCKRTKYCSRKCQLKAWGYHRYWC) adopts an MYND-type; degenerate zinc-finger fold. Residues Cys-530, Cys-533, His-551, and Cys-555 each coordinate Zn(2+). The segment covering 563–606 (MRSTNTTTGVNTPNEPSSLNATATTAADVSNSTSTFTPNISTTV) has biased composition (polar residues). The disordered stretch occupies residues 563 to 620 (MRSTNTTTGVNTPNEPSSLNATATTAADVSNSTSTFTPNISTTVPDEISNRDENSIPE). Residues 610 to 620 (ISNRDENSIPE) are compositionally biased toward basic and acidic residues.

It belongs to the MUB1/samB family. Interacts with UBR2 and RPN4.

It localises to the cytoplasm. Functionally, involved in the determination of the onset of polarized growth. Required for the ubiquitin-dependent degradation of RPN4. Cooperates with UBR2 to transfer ubiquitin from RAD6 to RPN4. The protein is MYND-type zinc finger protein MUB1 (MUB1) of Saccharomyces cerevisiae (strain ATCC 204508 / S288c) (Baker's yeast).